The chain runs to 361 residues: Putative agmatine deiminase (361 aa).

Cys354 functions as the Amidino-cysteine intermediate in the catalytic mechanism.

It belongs to the agmatine deiminase family.

It carries out the reaction agmatine + H2O = N-carbamoylputrescine + NH4(+). The polypeptide is Putative agmatine deiminase (Streptococcus pneumoniae (strain ATCC BAA-255 / R6)).